The chain runs to 595 residues: Elongation factor 4 (595 aa).

The region spanning 1–183 is the tr-type G domain; sequence MNVRNFSIIA…AIVERIPPPP (183 aa). GTP contacts are provided by residues 13 to 18 and 130 to 133; these read DHGKST and NKID.

This sequence belongs to the TRAFAC class translation factor GTPase superfamily. Classic translation factor GTPase family. LepA subfamily.

The protein resides in the cell membrane. It catalyses the reaction GTP + H2O = GDP + phosphate + H(+). Required for accurate and efficient protein synthesis under certain stress conditions. May act as a fidelity factor of the translation reaction, by catalyzing a one-codon backward translocation of tRNAs on improperly translocated ribosomes. Back-translocation proceeds from a post-translocation (POST) complex to a pre-translocation (PRE) complex, thus giving elongation factor G a second chance to translocate the tRNAs correctly. Binds to ribosomes in a GTP-dependent manner. The polypeptide is Elongation factor 4 (Deinococcus geothermalis (strain DSM 11300 / CIP 105573 / AG-3a)).